The primary structure comprises 450 residues: Probable cysteine desulfurase, mitochondrial (450 aa).

Residues 1 to 52 (MNRSILKFVKNGIISSSSRINNNGFINKNNNNRWFATLPQPNRGIAGEKQPI) constitute a mitochondrion transit peptide. Pyridoxal 5'-phosphate contacts are provided by residues 120–121 (AT), Asn200, Gln228, and 248–250 (SGH). N6-(pyridoxal phosphate)lysine is present on Lys251. Pyridoxal 5'-phosphate is bound at residue Thr288. Catalysis depends on Cys374, which acts as the Cysteine persulfide intermediate. Residue Cys374 participates in [2Fe-2S] cluster binding.

Belongs to the class-V pyridoxal-phosphate-dependent aminotransferase family. NifS/IscS subfamily. The cofactor is pyridoxal 5'-phosphate.

It localises to the mitochondrion. It is found in the nucleus. It catalyses the reaction (sulfur carrier)-H + L-cysteine = (sulfur carrier)-SH + L-alanine. Its function is as follows. Catalyzes the removal of elemental sulfur from cysteine to produce alanine. It supplies the inorganic sulfur for iron-sulfur (Fe-S) clusters. The polypeptide is Probable cysteine desulfurase, mitochondrial (nfs1) (Dictyostelium discoideum (Social amoeba)).